Consider the following 71-residue polypeptide: UPF0346 protein SPG_0874 (71 aa).

It belongs to the UPF0346 family.

This chain is UPF0346 protein SPG_0874, found in Streptococcus pneumoniae serotype 19F (strain G54).